Consider the following 136-residue polypeptide: Ig kappa chain V-V region MOPC 21 (136 aa).

The first 29 residues, 1-29, serve as a signal peptide directing secretion; it reads MHQTSMGIKMESHTLVFISILLCLYGADG. The segment at 30–52 is framework-1; sequence NIVMTQSPKSMSMSVGERVTLTC. Residues 53-63 form a complementarity-determining-1 region; sequence KASENVVTYVS. The tract at residues 64–78 is framework-2; it reads WYQQKPEQSPKLLIY. The segment at 79–85 is complementarity-determining-2; sequence GASNRYT. The interval 86-117 is framework-3; that stretch reads GVPDRFTGSGSATDFTLTISSVQAEDLADYHC. Residues 118 to 126 form a complementarity-determining-3 region; it reads GQGYSYPYT. The tract at residues 127-136 is framework-4; that stretch reads FGGGTKLEIK.

This is Ig kappa chain V-V region MOPC 21 from Mus musculus (Mouse).